The chain runs to 394 residues: S-adenosylmethionine synthase (394 aa).

His-18 provides a ligand contact to ATP. Asp-20 is a Mg(2+) binding site. Glu-46 lines the K(+) pocket. Positions 59 and 102 each coordinate L-methionine. The flexible loop stretch occupies residues Gln-102 to Ala-112. ATP contacts are provided by residues Asp-175–Lys-177, Asp-250, Arg-256–Lys-257, Ala-273, and Lys-277. Asp-250 lines the L-methionine pocket. Lys-281 lines the L-methionine pocket.

Belongs to the AdoMet synthase family. In terms of assembly, homotetramer; dimer of dimers. Requires Mg(2+) as cofactor. K(+) serves as cofactor.

The protein localises to the cytoplasm. It carries out the reaction L-methionine + ATP + H2O = S-adenosyl-L-methionine + phosphate + diphosphate. It participates in amino-acid biosynthesis; S-adenosyl-L-methionine biosynthesis; S-adenosyl-L-methionine from L-methionine: step 1/1. Catalyzes the formation of S-adenosylmethionine (AdoMet) from methionine and ATP. The overall synthetic reaction is composed of two sequential steps, AdoMet formation and the subsequent tripolyphosphate hydrolysis which occurs prior to release of AdoMet from the enzyme. The sequence is that of S-adenosylmethionine synthase from Brachyspira hyodysenteriae (strain ATCC 49526 / WA1).